Reading from the N-terminus, the 68-residue chain is MPGPDVKCFCCRDGKECACGGGECCITGKCCKEGDRTCCGKCSNAACKCADGCKCEGACACTMGNCTC.

Belongs to the metallothionein superfamily. Type 4 family.

Functionally, metallothioneins have a high content of cysteine residues that bind various heavy metals. This chain is Metallothionein (MT1), found in Lytechinus pictus (Painted sea urchin).